A 450-amino-acid chain; its full sequence is tRNA-2-methylthio-N(6)-dimethylallyladenosine synthase (450 aa).

An MTTase N-terminal domain is found at 8–128 (KRLYIKTYGC…LPELIARAHR (121 aa)). Cysteine 17, cysteine 53, cysteine 91, cysteine 166, cysteine 170, and cysteine 173 together coordinate [4Fe-4S] cluster. The Radical SAM core domain maps to 152–382 (RPTGVTAFLT…QALLEQQQLA (231 aa)). The 63-residue stretch at 385 to 447 (AAQAGRVLPV…RNSLAGVLEL (63 aa)) folds into the TRAM domain.

This sequence belongs to the methylthiotransferase family. MiaB subfamily. As to quaternary structure, monomer. It depends on [4Fe-4S] cluster as a cofactor.

The protein resides in the cytoplasm. The enzyme catalyses N(6)-dimethylallyladenosine(37) in tRNA + (sulfur carrier)-SH + AH2 + 2 S-adenosyl-L-methionine = 2-methylsulfanyl-N(6)-dimethylallyladenosine(37) in tRNA + (sulfur carrier)-H + 5'-deoxyadenosine + L-methionine + A + S-adenosyl-L-homocysteine + 2 H(+). Catalyzes the methylthiolation of N6-(dimethylallyl)adenosine (i(6)A), leading to the formation of 2-methylthio-N6-(dimethylallyl)adenosine (ms(2)i(6)A) at position 37 in tRNAs that read codons beginning with uridine. The polypeptide is tRNA-2-methylthio-N(6)-dimethylallyladenosine synthase (Phenylobacterium zucineum (strain HLK1)).